Consider the following 433-residue polypeptide: Histidinol dehydrogenase (433 aa).

NAD(+) contacts are provided by Tyr-130, Gln-191, and Asn-214. Residues Ser-237, Gln-259, and His-262 each contribute to the substrate site. Positions 259 and 262 each coordinate Zn(2+). Catalysis depends on proton acceptor residues Glu-327 and His-328. Substrate contacts are provided by His-328, Asp-361, Glu-415, and His-420. Zn(2+) is bound at residue Asp-361. Position 420 (His-420) interacts with Zn(2+).

The protein belongs to the histidinol dehydrogenase family. It depends on Zn(2+) as a cofactor.

The catalysed reaction is L-histidinol + 2 NAD(+) + H2O = L-histidine + 2 NADH + 3 H(+). It participates in amino-acid biosynthesis; L-histidine biosynthesis; L-histidine from 5-phospho-alpha-D-ribose 1-diphosphate: step 9/9. Catalyzes the sequential NAD-dependent oxidations of L-histidinol to L-histidinaldehyde and then to L-histidine. The sequence is that of Histidinol dehydrogenase from Ruegeria pomeroyi (strain ATCC 700808 / DSM 15171 / DSS-3) (Silicibacter pomeroyi).